A 529-amino-acid chain; its full sequence is Peptide chain release factor 3 (529 aa).

Residues 10-278 enclose the tr-type G domain; it reads ARRRTFAIIS…MFVEFAPGPQ (269 aa). GTP-binding positions include 19–26, 87–91, and 141–144; these read SHPDAGKT, DTPGH, and NKMD.

The protein belongs to the TRAFAC class translation factor GTPase superfamily. Classic translation factor GTPase family. PrfC subfamily.

Its subcellular location is the cytoplasm. Functionally, increases the formation of ribosomal termination complexes and stimulates activities of RF-1 and RF-2. It binds guanine nucleotides and has strong preference for UGA stop codons. It may interact directly with the ribosome. The stimulation of RF-1 and RF-2 is significantly reduced by GTP and GDP, but not by GMP. This chain is Peptide chain release factor 3, found in Nitratidesulfovibrio vulgaris (strain DSM 19637 / Miyazaki F) (Desulfovibrio vulgaris).